Here is a 194-residue protein sequence, read N- to C-terminus: Probable proteasome subunit beta type-4 (194 aa).

This sequence belongs to the peptidase T1B family. As to quaternary structure, the 26S proteasome consists of a 20S proteasome core and two 19S regulatory subunits. The 20S proteasome core is composed of 28 subunits that are arranged in four stacked rings, resulting in a barrel-shaped structure. The two end rings are each formed by seven alpha subunits, and the two central rings are each formed by seven beta subunits. The catalytic chamber with the active sites is on the inside of the barrel.

The protein localises to the cytoplasm. It localises to the nucleus. Functionally, non-catalytic component of the proteasome, a multicatalytic proteinase complex which is characterized by its ability to cleave peptides with Arg, Phe, Tyr, Leu, and Glu adjacent to the leaving group at neutral or slightly basic pH. The proteasome has an ATP-dependent proteolytic activity. In Schizosaccharomyces pombe (strain 972 / ATCC 24843) (Fission yeast), this protein is Probable proteasome subunit beta type-4.